The sequence spans 143 residues: 3-hydroxyacyl-[acyl-carrier-protein] dehydratase FabZ (143 aa).

Residue His-47 is part of the active site.

The protein belongs to the thioester dehydratase family. FabZ subfamily.

The protein localises to the cytoplasm. It carries out the reaction a (3R)-hydroxyacyl-[ACP] = a (2E)-enoyl-[ACP] + H2O. In terms of biological role, involved in unsaturated fatty acids biosynthesis. Catalyzes the dehydration of short chain beta-hydroxyacyl-ACPs and long chain saturated and unsaturated beta-hydroxyacyl-ACPs. The polypeptide is 3-hydroxyacyl-[acyl-carrier-protein] dehydratase FabZ (Moorella thermoacetica (strain ATCC 39073 / JCM 9320)).